The primary structure comprises 343 residues: MQLNDFDYYLPTELIAQQPAQNRDASRLMTLDRVNGELNETIISEIAALFRDGDLLVINDTRVIPARLLGKKESGGRVEVFLVRRLLEPGEVWQCLIKASKSPKPGSLIILSEGVVARVLERSELDTWAVSFSPVEGFLDRLERIGSMPLPPYIRRSAGDDDRERYQTVFARAKGAVAAPTAGLHFTDALLQKIRQQGVEIAPLTLHVGLGTFMPVRVDDLKDHRMHREYYFIPEATARAVNARKNDGGRVVALGTTTTRALEHAAAGNGSVQPGEGEADIFICPGYTFKVVDALITNFHLPKSTLLMLVSALAGKDRLFNAYNEAVNRNFRFFSYGDAMFIY.

This sequence belongs to the QueA family. Monomer.

Its subcellular location is the cytoplasm. The enzyme catalyses 7-aminomethyl-7-carbaguanosine(34) in tRNA + S-adenosyl-L-methionine = epoxyqueuosine(34) in tRNA + adenine + L-methionine + 2 H(+). The protein operates within tRNA modification; tRNA-queuosine biosynthesis. Its function is as follows. Transfers and isomerizes the ribose moiety from AdoMet to the 7-aminomethyl group of 7-deazaguanine (preQ1-tRNA) to give epoxyqueuosine (oQ-tRNA). The protein is S-adenosylmethionine:tRNA ribosyltransferase-isomerase of Geotalea uraniireducens (strain Rf4) (Geobacter uraniireducens).